The sequence spans 490 residues: Aspartyl/glutamyl-tRNA(Asn/Gln) amidotransferase subunit B (490 aa).

The protein belongs to the GatB/GatE family. GatB subfamily. Heterotrimer of A, B and C subunits.

It carries out the reaction L-glutamyl-tRNA(Gln) + L-glutamine + ATP + H2O = L-glutaminyl-tRNA(Gln) + L-glutamate + ADP + phosphate + H(+). It catalyses the reaction L-aspartyl-tRNA(Asn) + L-glutamine + ATP + H2O = L-asparaginyl-tRNA(Asn) + L-glutamate + ADP + phosphate + 2 H(+). In terms of biological role, allows the formation of correctly charged Asn-tRNA(Asn) or Gln-tRNA(Gln) through the transamidation of misacylated Asp-tRNA(Asn) or Glu-tRNA(Gln) in organisms which lack either or both of asparaginyl-tRNA or glutaminyl-tRNA synthetases. The reaction takes place in the presence of glutamine and ATP through an activated phospho-Asp-tRNA(Asn) or phospho-Glu-tRNA(Gln). The polypeptide is Aspartyl/glutamyl-tRNA(Asn/Gln) amidotransferase subunit B (Burkholderia pseudomallei (strain 1106a)).